The sequence spans 830 residues: Isethionate sulfite-lyase (830 aa).

The 670-residue stretch at 31 to 700 folds into the PFL domain; the sequence is KRVFKLLERF…VVSATPNGRV (670 aa). 2-hydroxyethane-1-sulfonate contacts are provided by residues Arg189, Gln193, 468 to 470, and Arg678; that span reads CIE. Cys468 (cysteine radical intermediate) is an active-site residue. Glu470 functions as the Proton acceptor in the catalytic mechanism. A Glycine radical domain is found at 707–830; that stretch reads DGSSPSHGAD…LIARTGHDQM (124 aa). The residue at position 805 (Gly805) is a Glycine radical.

Belongs to the glycyl radical enzyme (GRE) family. As to quaternary structure, homodimer. Post-translationally, requires the activating protein IslB to generate the key active site glycyl radical on Gly-805 that is involved in catalysis.

The enzyme catalyses 2-hydroxyethane-1-sulfonate = acetaldehyde + sulfite + H(+). The protein operates within organosulfur degradation; alkanesulfonate degradation. Its function is as follows. Involved in an anaerobic respiration pathway that converts the sulfonate taurine (2-aminoethanesulfonate) to ammonia, acetate and sulfide. Catalyzes the radical-mediated C-S bond cleavage of isethionate (2-hydroxyethanesulfonate) to form sulfite and acetaldehyde. Is not able to use any alternate organosulfonate or (S)-1,2-propanediol or choline as a substrate, showing that this enzyme is highly specific for isethionate. The polypeptide is Isethionate sulfite-lyase (Bilophila wadsworthia (strain 3_1_6)).